A 414-amino-acid polypeptide reads, in one-letter code: L-cysteine:1D-myo-inositol 2-amino-2-deoxy-alpha-D-glucopyranoside ligase (414 aa).

A disordered region spans residues 1–38; it reads MRSWPAPEVPNLPEAGLPGPALPLHLHDTATGTVRPTR. Low complexity predominate over residues 11–38; it reads NLPEAGLPGPALPLHLHDTATGTVRPTR. Cysteine 48 serves as a coordination point for Zn(2+). L-cysteinyl-5'-AMP-binding positions include 48–51, threonine 63, and 86–88; these read CGIT and NVT. A 'HIGH' region motif is present at residues 50–60; sequence ITPYDATHLGH. The 'ERGGDP' region motif lies at 188–193; the sequence is ERGGDP. Tryptophan 228 is an L-cysteinyl-5'-AMP binding site. Zn(2+) is bound at residue cysteine 232. Residue 250 to 252 participates in L-cysteinyl-5'-AMP binding; it reads GSD. Histidine 257 contributes to the Zn(2+) binding site. L-cysteinyl-5'-AMP is bound at residue valine 284. The 'KMSKS' region signature appears at 290-294; it reads KMSKS.

Belongs to the class-I aminoacyl-tRNA synthetase family. MshC subfamily. In terms of assembly, monomer. Zn(2+) serves as cofactor.

It catalyses the reaction 1D-myo-inositol 2-amino-2-deoxy-alpha-D-glucopyranoside + L-cysteine + ATP = 1D-myo-inositol 2-(L-cysteinylamino)-2-deoxy-alpha-D-glucopyranoside + AMP + diphosphate + H(+). In terms of biological role, catalyzes the ATP-dependent condensation of GlcN-Ins and L-cysteine to form L-Cys-GlcN-Ins. This chain is L-cysteine:1D-myo-inositol 2-amino-2-deoxy-alpha-D-glucopyranoside ligase, found in Thermomonospora curvata (strain ATCC 19995 / DSM 43183 / JCM 3096 / KCTC 9072 / NBRC 15933 / NCIMB 10081 / Henssen B9).